The chain runs to 775 residues: Phenylalanine--tRNA ligase beta subunit (775 aa).

Residues 39 to 147 enclose the tRNA-binding domain; it reads GIDLDGVVFG…EDFKPGTDAN (109 aa). One can recognise a B5 domain in the interval 394-470; it reads YKPKKVFLPQ…RVKGYEHYTS (77 aa). Positions 448, 454, 457, and 458 each coordinate Mg(2+). In terms of domain architecture, FDX-ACB spans 681 to 774; sequence AKFPPVVRDI…LKEKYGVELR (94 aa).

The protein belongs to the phenylalanyl-tRNA synthetase beta subunit family. Type 1 subfamily. Tetramer of two alpha and two beta subunits. Requires Mg(2+) as cofactor.

Its subcellular location is the cytoplasm. It carries out the reaction tRNA(Phe) + L-phenylalanine + ATP = L-phenylalanyl-tRNA(Phe) + AMP + diphosphate + H(+). The chain is Phenylalanine--tRNA ligase beta subunit (pheT) from Aquifex aeolicus (strain VF5).